Reading from the N-terminus, the 94-residue chain is Neurotoxin 213 (94 aa).

The N-terminal stretch at 1 to 22 (MLKFILTCTSVILFTAVEDSSC) is a signal peptide. Residues 24 to 88 (KGGNYPISVY…YWDYHRNNCK (65 aa)) enclose the LCN-type CS-alpha/beta domain. Disulfide bonds link Cys-39-Cys-62, Cys-48-Cys-67, and Cys-52-Cys-69.

The protein belongs to the long (3 C-C) scorpion toxin superfamily. Expressed by the venom gland.

The protein resides in the secreted. The sequence is that of Neurotoxin 213 from Lychas mucronatus (Chinese swimming scorpion).